Reading from the N-terminus, the 351-residue chain is D-alanine--D-alanine ligase (351 aa).

The region spanning 135–343 (NQIFLQSGQK…MEEVFSDLIE (209 aa)) is the ATP-grasp domain. 167–222 (LETLGFPQFLKPVEGGSSVSVYKITNREQLKEKLALIFESDSKVMSQSFLTGIEVS) lines the ATP pocket. Mg(2+)-binding residues include Asp-298, Glu-310, and Asn-312.

It belongs to the D-alanine--D-alanine ligase family. Mg(2+) is required as a cofactor. It depends on Mn(2+) as a cofactor.

It is found in the cytoplasm. The enzyme catalyses 2 D-alanine + ATP = D-alanyl-D-alanine + ADP + phosphate + H(+). Its pathway is cell wall biogenesis; peptidoglycan biosynthesis. Its function is as follows. Cell wall formation. The chain is D-alanine--D-alanine ligase from Leptospira interrogans serogroup Icterohaemorrhagiae serovar Lai (strain 56601).